A 132-amino-acid chain; its full sequence is MVKNQTQKKGVKRKQVKNIPSGVVHVKATFNNTIVTITDPAGNVISWASAGKVGYSGSRKSSAFAATVAAQDAAKTAMSSGLKEVEVSLKGTGAGRESAVRALISSGLIVSVIRDETPVPHNGCRPRKRRRV.

The protein belongs to the universal ribosomal protein uS11 family. As to quaternary structure, part of the 30S ribosomal subunit. Interacts with proteins S7 and S18. Binds to IF-3.

Functionally, located on the platform of the 30S subunit, it bridges several disparate RNA helices of the 16S rRNA. Forms part of the Shine-Dalgarno cleft in the 70S ribosome. This chain is Small ribosomal subunit protein uS11, found in Chlamydia muridarum (strain MoPn / Nigg).